The primary structure comprises 490 residues: Metal cation symporter ZIP14 (490 aa).

The N-terminal stretch at 1–28 (MKLLHPAFQSCLLLTLLGLWRTTPEAHA) is a signal peptide. The Extracellular portion of the chain corresponds to 29–155 (SSPGAPAISA…PSAVEVWGYG (127 aa)). 3 N-linked (GlcNAc...) asparagine glycosylation sites follow: N75, N85, and N100. A helical transmembrane segment spans residues 156–176 (LLCVTVISLCSLLGASVVPFM). The Cytoplasmic segment spans residues 177 to 184 (KKTFYKRL). A helical membrane pass occupies residues 185 to 205 (LLYFIALAIGTLYSNALFQLI). The Extracellular segment spans residues 206–222 (PEAFGFNPLEDYYVSKS). The chain crosses the membrane as a helical span at residues 223-243 (AVVFGGFYLFFFTEKILKILL). At 244–395 (KQKNEHHHGH…LLNAGMSIQQ (152 aa)) the chain is on the cytoplasmic side. The HHHGHXHX-motif motif lies at 249 to 256 (HHHGHSHY). Positions 374–379 (EEFPHE) match the XEXPHE-motif motif. A helical membrane pass occupies residues 396-416 (ALFFNFLSACCCYLGLAFGIL). Topologically, residues 417–422 (AGSHFS) are extracellular. The chain crosses the membrane as a helical span at residues 423 to 443 (ANWIFALAGGMFLYISLADMF). At 444 to 458 (PEMNEVCQEDERKGS) the chain is on the cytoplasmic side. Residues 459-479 (ILIPFVIQNLGLLTGFTIMVV) form a helical membrane-spanning segment. Residues 480–490 (LTMYSGQIQIG) are Extracellular-facing.

Belongs to the ZIP transporter (TC 2.A.5) family. As to quaternary structure, homotrimer. Ubiquitinated. Ubiquitination occurs upon iron depletion. The ubiquitinated form undergoes proteasomal degradation. Post-translationally, N-glycosylated. N-glycosylation at Asn-100 is required for iron-regulated extraction of the transporter from membranes and subsequent proteasomal degradation.

It is found in the cell membrane. The protein resides in the apical cell membrane. The protein localises to the basolateral cell membrane. It localises to the early endosome membrane. Its subcellular location is the late endosome membrane. It is found in the lysosome membrane. It carries out the reaction Zn(2+)(out) + 2 hydrogencarbonate(out) = Zn(2+)(in) + 2 hydrogencarbonate(in). It catalyses the reaction Mn(2+)(out) + 2 hydrogencarbonate(out) = Mn(2+)(in) + 2 hydrogencarbonate(in). The enzyme catalyses Fe(2+)(out) + 2 hydrogencarbonate(out) = Fe(2+)(in) + 2 hydrogencarbonate(in). The catalysed reaction is Cd(2+)(out) + 2 hydrogencarbonate(out) = Cd(2+)(in) + 2 hydrogencarbonate(in). Its function is as follows. Electroneutral transporter of the plasma membrane mediating the cellular uptake of the divalent metal cations zinc, manganese and iron that are important for tissue homeostasis, metabolism, development and immunity. Functions as an energy-dependent symporter, transporting through the membranes an electroneutral complex composed of a divalent metal cation and two bicarbonate anions. Beside these endogenous cellular substrates, can also import cadmium a non-essential metal which is cytotoxic and carcinogenic. Controls the cellular uptake by the intestinal epithelium of systemic zinc, which is in turn required to maintain tight junctions and the intestinal permeability. Modifies the activity of zinc-dependent phosphodiesterases, thereby indirectly regulating G protein-coupled receptor signaling pathways important for gluconeogenesis and chondrocyte differentiation. Regulates insulin receptor signaling, glucose uptake, glycogen synthesis and gluconeogenesis in hepatocytes through the zinc-dependent intracellular catabolism of insulin. Through zinc cellular uptake also plays a role in the adaptation of cells to endoplasmic reticulum stress. Major manganese transporter of the basolateral membrane of intestinal epithelial cells, it plays a central role in manganese systemic homeostasis through intestinal manganese uptake. Also involved in manganese extracellular uptake by cells of the blood-brain barrier. May also play a role in manganese and zinc homeostasis participating in their elimination from the blood through the hepatobiliary excretion. Also functions in the extracellular uptake of free iron. May also function intracellularly and mediate the transport from endosomes to cytosol of iron endocytosed by transferrin. Plays a role in innate immunity by regulating the expression of cytokines by activated macrophages. The protein is Metal cation symporter ZIP14 of Pongo abelii (Sumatran orangutan).